The following is a 348-amino-acid chain: L-threonine 3-dehydrogenase (348 aa).

Cys42 contacts Zn(2+). Active-site charge relay system residues include Thr44 and His47. Zn(2+)-binding residues include His67, Glu68, Cys97, Cys100, Cys103, and Cys111. Residues Leu179, Glu199, Arg204, 266-268 (LGL), and 291-292 (IT) contribute to the NAD(+) site.

Belongs to the zinc-containing alcohol dehydrogenase family. In terms of assembly, homotetramer. It depends on Zn(2+) as a cofactor.

The protein localises to the cytoplasm. It carries out the reaction L-threonine + NAD(+) = (2S)-2-amino-3-oxobutanoate + NADH + H(+). Its pathway is amino-acid degradation; L-threonine degradation via oxydo-reductase pathway; glycine from L-threonine: step 1/2. In terms of biological role, catalyzes the NAD(+)-dependent oxidation of L-threonine to 2-amino-3-ketobutyrate. This Pyrococcus abyssi (strain GE5 / Orsay) protein is L-threonine 3-dehydrogenase.